A 408-amino-acid polypeptide reads, in one-letter code: LL-diaminopimelate aminotransferase (408 aa).

Substrate-binding residues include tyrosine 15 and glycine 42. Pyridoxal 5'-phosphate is bound by residues tyrosine 72, 108-109, tyrosine 132, asparagine 187, tyrosine 218, and 246-248; these read SK and SFS. Positions 109, 132, and 187 each coordinate substrate. Lysine 249 is subject to N6-(pyridoxal phosphate)lysine. Residues arginine 257 and asparagine 292 each contribute to the pyridoxal 5'-phosphate site. The substrate site is built by asparagine 292 and arginine 388.

This sequence belongs to the class-I pyridoxal-phosphate-dependent aminotransferase family. LL-diaminopimelate aminotransferase subfamily. In terms of assembly, homodimer. It depends on pyridoxal 5'-phosphate as a cofactor.

It carries out the reaction (2S,6S)-2,6-diaminopimelate + 2-oxoglutarate = (S)-2,3,4,5-tetrahydrodipicolinate + L-glutamate + H2O + H(+). Its pathway is amino-acid biosynthesis; L-lysine biosynthesis via DAP pathway; LL-2,6-diaminopimelate from (S)-tetrahydrodipicolinate (aminotransferase route): step 1/1. Involved in the synthesis of meso-diaminopimelate (m-DAP or DL-DAP), required for both lysine and peptidoglycan biosynthesis. Catalyzes the direct conversion of tetrahydrodipicolinate to LL-diaminopimelate. The chain is LL-diaminopimelate aminotransferase from Prochlorococcus marinus (strain MIT 9515).